A 1014-amino-acid polypeptide reads, in one-letter code: Regulator of telomere elongation helicase 1 homolog (1014 aa).

The Helicase ATP-binding domain occupies 7–324; the sequence is AGIPVHFPFE…KEMLLELEKA (318 aa). 42 to 49 lines the ATP pocket; sequence SPTGTGKT. 4 residues coordinate [4Fe-4S] cluster: Cys147, Cys165, Cys174, and Cys210. The DEAH box signature appears at 253-256; that stretch reads DEAH. Position 873 is a phosphothreonine (Thr873). The segment at 891–917 is disordered; sequence TDMVKTEPGTSNSCSYGNTSSSGSDSR. Over residues 899–917 the composition is skewed to low complexity; that stretch reads GTSNSCSYGNTSSSGSDSR.

The protein belongs to the helicase family. RAD3/XPD subfamily.

Its subcellular location is the nucleus. It catalyses the reaction ATP + H2O = ADP + phosphate + H(+). In terms of biological role, a probable ATP-dependent DNA helicase implicated in DNA repair and the maintenance of genomic stability. Acts as an anti-recombinase to counteract toxic recombination and limit crossover during meiosis. Regulates meiotic recombination and crossover homeostasis by physically dissociating strand invasion events and thereby promotes noncrossover repair by meiotic synthesis dependent strand annealing (SDSA) as well as disassembly of D loop recombination intermediates. In Drosophila mojavensis (Fruit fly), this protein is Regulator of telomere elongation helicase 1 homolog.